The following is a 247-amino-acid chain: Opacity protein opA52 (247 aa).

Ala-1 is a signal peptide.

This sequence belongs to the opacity porin family.

It localises to the cell outer membrane. Functionally, implicated in a number of adherence functions. OPA proteins are implicated in pathogenesis and are subject to phase variation. The polypeptide is Opacity protein opA52 (opaG) (Neisseria gonorrhoeae).